A 130-amino-acid polypeptide reads, in one-letter code: MSQQLSSQTPSNQDRIVGKHVFGNLYDIDDKLLMDKDLLEGLVLEAVKIAKMNLVEIKSWSFGGKKGGVSVIALVEESHIALHTWNEYKYATLDVYTCGVDSNPQAAFEFIVSNLKPKRHQMFFADRSSE.

Ser78 serves as the catalytic Schiff-base intermediate with substrate; via pyruvic acid. Ser78 is modified (pyruvic acid (Ser); by autocatalysis). Catalysis depends on His83, which acts as the Proton acceptor; for processing activity. Catalysis depends on Cys98, which acts as the Proton donor; for catalytic activity.

This sequence belongs to the prokaryotic AdoMetDC family. Type 1 subfamily. Heterooctamer of four alpha and four beta chains arranged as a tetramer of alpha/beta heterodimers. Pyruvate serves as cofactor. Is synthesized initially as an inactive proenzyme. Formation of the active enzyme involves a self-maturation process in which the active site pyruvoyl group is generated from an internal serine residue via an autocatalytic post-translational modification. Two non-identical subunits are generated from the proenzyme in this reaction, and the pyruvate is formed at the N-terminus of the alpha chain, which is derived from the carboxyl end of the proenzyme. The post-translation cleavage follows an unusual pathway, termed non-hydrolytic serinolysis, in which the side chain hydroxyl group of the serine supplies its oxygen atom to form the C-terminus of the beta chain, while the remainder of the serine residue undergoes an oxidative deamination to produce ammonia and the pyruvoyl group blocking the N-terminus of the alpha chain.

It catalyses the reaction L-arginine + H(+) = agmatine + CO2. Its pathway is amine and polyamine biosynthesis; agmatine biosynthesis; agmatine from L-arginine: step 1/1. Its function is as follows. Specifically catalyzes the decarboxylation of L-arginine to agmatine. Has no S-adenosylmethionine decarboxylase (AdoMetDC) activity. The polypeptide is Arginine decarboxylase proenzyme (Sulfolobus acidocaldarius (strain ATCC 33909 / DSM 639 / JCM 8929 / NBRC 15157 / NCIMB 11770)).